Here is a 135-residue protein sequence, read N- to C-terminus: Large ribosomal subunit protein bL19 (135 aa).

The protein belongs to the bacterial ribosomal protein bL19 family.

Its function is as follows. This protein is located at the 30S-50S ribosomal subunit interface and may play a role in the structure and function of the aminoacyl-tRNA binding site. The sequence is that of Large ribosomal subunit protein bL19 from Xanthomonas campestris pv. campestris (strain 8004).